A 1318-amino-acid polypeptide reads, in one-letter code: DNA-directed RNA polymerase subunit beta' (1318 aa).

4 residues coordinate Zn(2+): Cys-60, Cys-62, Cys-75, and Cys-78. Asp-535, Asp-537, and Asp-539 together coordinate Mg(2+). Positions 890, 967, 974, and 977 each coordinate Zn(2+).

Belongs to the RNA polymerase beta' chain family. As to quaternary structure, the RNAP catalytic core consists of 2 alpha, 1 beta, 1 beta' and 1 omega subunit. When a sigma factor is associated with the core the holoenzyme is formed, which can initiate transcription. The cofactor is Mg(2+). Requires Zn(2+) as cofactor.

The enzyme catalyses RNA(n) + a ribonucleoside 5'-triphosphate = RNA(n+1) + diphosphate. DNA-dependent RNA polymerase catalyzes the transcription of DNA into RNA using the four ribonucleoside triphosphates as substrates. This chain is DNA-directed RNA polymerase subunit beta', found in Rhodococcus jostii (strain RHA1).